Consider the following 288-residue polypeptide: Male determiner protein Nix (288 aa).

RRM domains lie at 19 to 94, 108 to 179, and 205 to 282; these read YCIY…LPLS, IVVY…KVER, and RSIG…FVPE.

Functionally, male determiner protein (M-factor) that controls male somatic sexual differentiation. Acts as a dominant factor that regulates the mRNA splicing of doublesex (dsx) or fruitless (fru) transcripts and promotes expression of male splice forms of dsx and fru. The chain is Male determiner protein Nix from Aedes aegypti (Yellowfever mosquito).